We begin with the raw amino-acid sequence, 237 residues long: Ubiquinone biosynthesis O-methyltransferase (237 aa).

Residues Arg39, Gly59, Asp80, and Met124 each contribute to the S-adenosyl-L-methionine site.

Belongs to the methyltransferase superfamily. UbiG/COQ3 family.

The catalysed reaction is a 3-demethylubiquinol + S-adenosyl-L-methionine = a ubiquinol + S-adenosyl-L-homocysteine + H(+). It carries out the reaction a 3-(all-trans-polyprenyl)benzene-1,2-diol + S-adenosyl-L-methionine = a 2-methoxy-6-(all-trans-polyprenyl)phenol + S-adenosyl-L-homocysteine + H(+). Its pathway is cofactor biosynthesis; ubiquinone biosynthesis. In terms of biological role, O-methyltransferase that catalyzes the 2 O-methylation steps in the ubiquinone biosynthetic pathway. The polypeptide is Ubiquinone biosynthesis O-methyltransferase (Vibrio atlanticus (strain LGP32) (Vibrio splendidus (strain Mel32))).